Reading from the N-terminus, the 8384-residue chain is Mucin-19 (8384 aa).

Residues 1–21 (MKLILWYLVVALWCFFKDVEA) form the signal peptide. Disordered stretches follow at residues 33-197 (AASR…YGAG), 222-247 (SKAD…PDAG), 279-305 (GDTG…IDLG), and 332-467 (QEGF…PEAT). Composition is skewed to low complexity over residues 35–48 (SRSG…SSSG) and 88–98 (GGFFNSSSSSG). Over residues 169-184 (DKSRERWDAGNSRSED) the composition is skewed to basic and acidic residues. Residues 187–197 (ADSTNTRYGAG) are compositionally biased toward polar residues. The segment covering 279–299 (GDTGISSKTVEGNQTSSSGGS) has biased composition (polar residues). A compositionally biased stretch (low complexity) spans 359-369 (GSDSSSSGDSS). The segment covering 370 to 381 (ARNGFENSSGIS) has biased composition (polar residues). Composition is skewed to low complexity over residues 424–435 (SDSGGNTWSSDS) and 443–452 (TSSSEYSTSG). VWFD domains follow at residues 478–649 (GEIS…QHCN), 815–995 (GRCK…SSCI), and 1274–1447 (TICH…QECS). Disulfide bonds link cysteine 502-cysteine 648, cysteine 817-cysteine 952, cysteine 838-cysteine 994, cysteine 857-cysteine 865, cysteine 1276-cysteine 1411, cysteine 1298-cysteine 1446, cysteine 1307-cysteine 1408, and cysteine 1323-cysteine 1330. Disordered regions lie at residues 1680-1699 (TSSS…PFTT), 1732-2464 (AGTT…KSPG), 2484-2526 (LESE…TEGS), 2540-2827 (RPLD…MTGT), 2850-2917 (STVG…LGTI), 2984-3027 (VTTG…SGTT), 3075-3368 (GTTG…GKTG), 3386-3428 (TTRL…GKTG), 3585-3628 (ETTG…TNGL), 3667-3736 (GSSA…TGLP), 4105-4147 (TGSS…NGLS), 4187-4251 (SAGV…AEVT), 4315-4390 (GLSA…SARV), 4414-4455 (TGSS…TNGQ), 4510-4583 (TGTT…TGLP), 4790-4843 (TGTT…TGLP), 4895-4930 (SSAG…AGVT), 5130-5161 (TGTT…GVTG), 5429-5452 (VTGT…VTGK), 5464-5494 (GPSA…GTTG), 5880-5918 (GTSI…SAEM), 6069-6403 (TGKT…STES), 6440-6918 (GRAT…ETTK), 6953-7223 (GTSE…TGFK), 7250-7749 (SFST…SKTG), 7783-7975 (KNGS…EAGS), and 8020-8133 (SGRS…VSQP). Composition is skewed to low complexity over residues 1732 to 1746 (AGTT…TGAA), 1772 to 1813 (PGEA…TTGP), and 1820 to 1833 (GATS…EGMS). Polar residues predominate over residues 1835-1860 (VTGQSLGSTAGSDSEITAKTSFTGSS). The segment covering 1868–1879 (PSPGSPGHFSGG) has biased composition (low complexity). The segment covering 1880-1905 (TTEWGNVATTGAAGENTSGALGSTEG) has biased composition (polar residues). Low complexity predominate over residues 1909–1921 (ATTSAGSGNTAGT). Positions 1950-1968 (GSSTPGEADIGNTSFGKSG) are enriched in polar residues. Low complexity-rich tracts occupy residues 1969-1983 (TPTV…SPVS) and 2013-2049 (GGKI…SGPS). Residues 2055 to 2100 (NYGQSSEIPGTIKSSSDVSGTMGQSDTTSGPSVAVTRTSEQSSGVT) are compositionally biased toward polar residues. Low complexity-rich tracts occupy residues 2132 to 2147 (TTGS…GPSS) and 2159 to 2170 (GSGTSGQSVTGS). 2 stretches are compositionally biased toward polar residues: residues 2171–2186 (RATG…TVSF) and 2209–2225 (GSGT…TTRL). Composition is skewed to low complexity over residues 2233–2246 (TESS…TTPS) and 2280–2313 (SGPS…TKPS). The tract at residues 2238-6086 (GVTGTTTPSA…GVTGTTGLSA (3849 aa)) is approximate repeats of G-V-T-G-T-T-G-P-S-A. 2 stretches are compositionally biased toward polar residues: residues 2316-2332 (RTGT…TTEP) and 2354-2372 (ATES…TTIP). Residues 2403 to 2419 (SSGGSGATRSSGGGMGT) show a composition bias toward gly residues. A compositionally biased stretch (low complexity) spans 2420–2441 (TGQSTARSETTGPLFGLTGTFG). Positions 2442–2460 (QSATVTGTSSNSAGVTTPE) are enriched in polar residues. Low complexity-rich tracts occupy residues 2512 to 2526 (SAGE…TEGS), 2545 to 2571 (GSGT…TTRK), and 2578 to 2589 (TTGLSGLTGTSG). Polar residues-rich tracts occupy residues 2595–2610 (TGTS…TSEK) and 2638–2653 (TRPS…QSAR). Over residues 2654-2681 (VTETVGASAGVTGTTGPSTEGSGATGPS) the composition is skewed to low complexity. 2 stretches are compositionally biased toward polar residues: residues 2695–2748 (SGTT…TGTT) and 2755–2770 (TETT…TTGP). Residues 2787-2799 (ATRSSGGETETTG) are compositionally biased toward low complexity. Composition is skewed to polar residues over residues 2800–2827 (QSAV…MTGT), 2850–2859 (STVGLETTRP), and 2874–2892 (AQTT…QSAR). Low complexity predominate over residues 2894–2910 (TGASGPSVGVTGTTGPA). The span at 2984–2998 (VTTGPSVTGVETTAK) shows a compositional bias: polar residues. The span at 2999–3027 (TTSGGLSTTISSVGGTGTTGQSPERSGTT) shows a compositional bias: low complexity. Residues 3099–3109 (PSITGSGTTRP) are compositionally biased toward polar residues. Positions 3114-3130 (SWTAGTSSGGHSTTSPS) are enriched in low complexity. A compositionally biased stretch (polar residues) spans 3131–3159 (VRGTETTGQSAAESVTTGPVTGYTETSGP). Residues 3172 to 3188 (TVTQTTGSSAAVSGTTV) show a composition bias toward low complexity. Residues 3189–3224 (QSLTVSGTTRPSSGQTEITGSSVKESGTTESSAVRS) show a composition bias toward polar residues. Positions 3225-3277 (GTTGPTAGVTGTNGPSSAGVTGITGSSPGVTGTTGSSPGVTGTTGSSARSGTS) are enriched in low complexity. Composition is skewed to polar residues over residues 3303-3317 (ITGT…TGTT) and 3324-3362 (TGTT…SSAG). Residues 3390-3417 (SAGVTGTTGPSPGVTGTTGTPAGVTGTT) show a composition bias toward low complexity. 2 stretches are compositionally biased toward polar residues: residues 3702–3728 (VTGT…TTGP) and 4105–4116 (TGSSARSGTSIP). The segment covering 4117 to 4126 (SVGETGTTRT) has biased composition (low complexity). Positions 4320–4346 (VTGTTRPSAGVTGTTGQSAEVTGTTEP) are enriched in polar residues. Low complexity-rich tracts occupy residues 4347 to 4385 (SAGL…GTTG) and 4414 to 4426 (TGSS…STPS). Composition is skewed to low complexity over residues 5469–5494 (VTGT…GTTG) and 5889–5903 (TGTT…TTTG). Polar residues-rich tracts occupy residues 5908–5918 (ITGTNGLSAEM), 6071–6103 (KTRS…TTKT), and 6111–6121 (TRPSAGITATT). A compositionally biased stretch (low complexity) spans 6156-6168 (TTTGTTGVTTGTT). Composition is skewed to polar residues over residues 6217–6248 (EVST…TATT) and 6257–6275 (APGS…SAST). Residues 6284–6295 (TGSTRGVRTTGS) are compositionally biased toward low complexity. Composition is skewed to polar residues over residues 6303-6323 (GEFS…TTLT) and 6336-6346 (ESTTSLPQSAK). Positions 6378-6389 (SGTTISSGGSHT) are enriched in low complexity. Polar residues-rich tracts occupy residues 6440–6457 (GRAT…TSQA) and 6470–6503 (TTIT…TTYI). The segment covering 6507 to 6523 (GTTRGGLATATTGAFSG) has biased composition (low complexity). Polar residues predominate over residues 6560-6571 (TTFTSGGSHTEA). Low complexity predominate over residues 6581–6597 (TGTESRAATTRAAPGTT). A compositionally biased stretch (polar residues) spans 6599–6608 (VPGSSNTGAT). Positions 6612–6628 (GGSATTRGRITTATTGA) are enriched in low complexity. Composition is skewed to polar residues over residues 6669 to 6680 (RITSGGSYTATT) and 6689 to 6698 (APGSSNTGAT). The segment covering 6707 to 6718 (TRGRITTATTGA) has biased composition (low complexity). Residues 6752–6766 (TTLTGDRSSTGSESR) show a composition bias toward polar residues. The span at 6767–6781 (TATTGVAPGTTVAPG) shows a compositional bias: low complexity. Polar residues predominate over residues 6794-6817 (SGTTNIGRATGATTSIVGSDTSQA). The span at 6827 to 6842 (SPGASSTSQSSRPGTS) shows a compositional bias: low complexity. A compositionally biased stretch (polar residues) spans 6843–6875 (VTPDSSASESETVTTKEFSGTTAISRTSHTGTP). Low complexity predominate over residues 6887 to 6901 (TATTGVAPGTTVAPG). Composition is skewed to polar residues over residues 6902–6911 (SSNTEATTSV) and 6953–6964 (GTSEVAPSTTVA). Residues 6966–6994 (GSFSTAATTSPGASGTTGVTTTTKTTTSL) are compositionally biased toward low complexity. Residues 7006 to 7041 (SATTGAPGSRTGTAGVPSATTVSPGSSNSEATTSVG) show a composition bias toward polar residues. Low complexity predominate over residues 7045–7074 (KTGAETITEATTSTEGTGTSGTGFKTGTSE). The span at 7085–7094 (SFSTAATTSP) shows a compositional bias: polar residues. Low complexity predominate over residues 7095–7112 (GASGMTGVTTTTKTTTSL). Positions 7143–7158 (TRVTPGSSNSEATTSV) are enriched in polar residues. Low complexity-rich tracts occupy residues 7201 to 7215 (SGSS…TEGT) and 7250 to 7276 (SFST…TTSL). The segment covering 7293–7311 (SGTTVAPGSSNSEATTSVG) has biased composition (polar residues). Positions 7379–7397 (TTSTKGTGTSGTGFKTGTS) are enriched in low complexity. Over residues 7403–7421 (TTVSPGSFSTATISPGASR) the composition is skewed to polar residues. A compositionally biased stretch (low complexity) spans 7422 to 7435 (TTGAAPAAETTTSL). The segment covering 7465–7483 (SATTIAPGSSNSEATTSLG) has biased composition (polar residues). A compositionally biased stretch (gly residues) spans 7525-7537 (PLGGASGTSGGYV). 2 stretches are compositionally biased toward polar residues: residues 7544 to 7557 (PTTS…SRTI) and 7571 to 7596 (AGTS…TSPG). The span at 7600–7613 (MTGVRTTSKTTTSL) shows a compositional bias: low complexity. Polar residues-rich tracts occupy residues 7642 to 7669 (SSRT…SGTG) and 7698 to 7708 (SFSTAATTSPG). Residues 7715 to 7732 (TGPTAETTTFLGGSSTTG) show a composition bias toward low complexity. The span at 7783–7811 (KNGSMTTALGSQLSSSQTVIPGSSGTISH) shows a compositional bias: polar residues. Low complexity predominate over residues 7812 to 7828 (TTVAPGSSVTGTTTGAS). Positions 7830 to 7851 (DQVTGSKTGTTGVALSTTVAPG) are enriched in polar residues. The segment covering 7852 to 7861 (SSSTEATTST) has biased composition (low complexity). Polar residues predominate over residues 7862–7891 (GVHRTTVVGQKTGATTRGSAKQGTRSTIEA). Residues 7892–7917 (TTSFRGTGTTGSGMNTGTTGVVSGNT) show a composition bias toward low complexity. Residues 7918–7934 (ISPSSFNTEATSGTSER) are compositionally biased toward polar residues. The segment covering 7938-7952 (GSEIGTTGIVSGTTV) has biased composition (low complexity). Composition is skewed to polar residues over residues 7953–7965 (APGS…TTSL), 8020–8040 (SGRS…SGTT), 8048–8081 (TGNT…SISG), and 8110–8120 (ETGVQTGSTLV). Residues 8159–8225 (PVCHGPLGEE…DTCCEIGYCE (67 aa)) form the VWFC domain. Cystine bridges form between cysteine 8288–cysteine 8339, cysteine 8306–cysteine 8353, cysteine 8315–cysteine 8369, and cysteine 8319–cysteine 8371. One can recognise a CTCK domain in the interval 8288–8376 (CKNNCRSSLV…TTCSCLDICQ (89 aa)).

In terms of tissue distribution, expressed corneal epithelial cells, conjunctival goblet and epithelial cells and lacrimal gland cells (at protein level). Expressed by mucous cells of the submandibular gland and submucosal gland of the trachea. Expressed by middle ear epithelial cells.

Its subcellular location is the secreted. In terms of biological role, may function in ocular mucus homeostasis. In Homo sapiens (Human), this protein is Mucin-19 (MUC19).